The chain runs to 237 residues: Lectin alpha chain (237 aa).

Mn(2+) is bound by residues E8 and D10. 4 residues coordinate Ca(2+): D10, Y12, N14, and D19. Y12 serves as a coordination point for a carbohydrate. 2 residues coordinate Mn(2+): D19 and H24. Residue L99–Y100 coordinates a carbohydrate. D208 lines the Ca(2+) pocket. Position 228 (R228) interacts with a carbohydrate.

It belongs to the leguminous lectin family. As to quaternary structure, equilibrium between homodimer and homotetramer. Oligomerization is pH-dependent with homotetramers forming at pH 6.5 and above. The beta and gamma chains are produced by partial proteolytic processing of the lectin alpha chain by an asparaginyl endopeptidase. Mixture of 60% alpha lectin and 40% of its beta and gamma proteolytic fragments. As to expression, seed.

It is found in the vacuole. It localises to the aleurone grain. D-mannose/D-glucose-binding lectin. Has anti-inflammatory activity in rats. Induces histamine release in mast cells from hamster and rat. Induces lymphocyte proliferation and IFNG production. Shows toxicity against the aquatic snail B.glabrata at concentrations higher than 20 ug/ml. The chain is Lectin alpha chain from Dioclea virgata.